The primary structure comprises 100 residues: Small ribosomal subunit protein uS14c (100 aa).

Belongs to the universal ribosomal protein uS14 family. Part of the 30S ribosomal subunit.

The protein resides in the plastid. It is found in the chloroplast. Its function is as follows. Binds 16S rRNA, required for the assembly of 30S particles. The polypeptide is Small ribosomal subunit protein uS14c (Oenothera argillicola (Appalachian evening primrose)).